A 65-amino-acid polypeptide reads, in one-letter code: Putative cytochrome c oxidase subunit 5C-4 (65 aa).

Residues 20–37 (EIIYGITLGFAVGGLWKM) traverse the membrane as a helical segment.

It belongs to the cytochrome c oxidase subunit 5C family.

It is found in the mitochondrion inner membrane. Functionally, this protein is one of the nuclear-coded polypeptide chains of cytochrome c oxidase, the terminal oxidase in mitochondrial electron transport. The chain is Putative cytochrome c oxidase subunit 5C-4 from Arabidopsis thaliana (Mouse-ear cress).